The following is a 638-amino-acid chain: Epithelial sodium channel subunit delta (638 aa).

Residues 1–13 are compositionally biased toward basic and acidic residues; sequence MAEHRSMDGRMEA. Residues 1–47 form a disordered region; sequence MAEHRSMDGRMEAATRGGSHLQAAAQTPPRPGPPSAPPPPPKEGHQE. Residues 1–86 lie on the Cytoplasmic side of the membrane; sequence MAEHRSMDGR…CSRGNRLKTT (86 aa). Residues 28-41 show a composition bias toward pro residues; the sequence is PPRPGPPSAPPPPP. Residues 87 to 107 form a helical membrane-spanning segment; the sequence is SWGLLSLGALVALCWQLGLLF. Residues 108 to 530 are Extracellular-facing; that stretch reads ERHWHRPVLM…VPQLLSAMGS (423 aa). 2 N-linked (GlcNAc...) asparagine glycosylation sites follow: N166 and N384. A helical membrane pass occupies residues 531–551; it reads LCSLWFGASVLSLLELLELLL. The Cytoplasmic portion of the chain corresponds to 552–638; sequence DASALTLVLG…GPQPLETLDT (87 aa). Positions 574-613 are disordered; the sequence is RASPASGASSIKPEASQMPTPAGGTSDDPEPSGPHLPRVM.

It belongs to the amiloride-sensitive sodium channel (TC 1.A.6) family. SCNN1D subfamily. As to quaternary structure, can form an alternative heterotrimeric epithelial sodium channel (ENaC), composed of a delta (SCNN1D), beta (SCNN1B), and gamma (SCNN1G) subunit, where the delta (SCNN1D) subunit replaces the alpha (SCNN1A) subunit.

The protein resides in the apical cell membrane. It catalyses the reaction Na(+)(in) = Na(+)(out). Originally identified and characterized by its inhibition by the diuretic drug amiloride. Potential alternative pore-forming subunit of the epithelial sodium channel (ENaC), capable of replacing the alpha/SCNN1A subunit, creating a more active channel with distinct properties. ENaC functions in epithelial tissues, where it facilitates the electrodiffusion of sodium ions from the extracellular fluid through the apical membrane of cells, with water following osmotically, regulating sodium balance and fluid homeostasis. This subunit could also function independently as a sodium channel or assemble into other tissue-specific heterotrimeric sodium channels. This is Epithelial sodium channel subunit delta from Pan troglodytes (Chimpanzee).